The sequence spans 173 residues: Mesencephalic astrocyte-derived neurotrophic factor homolog (173 aa).

Positions 1–22 (MKTWHMVVVIGFLATLAQTSLA) are cleaved as a signal peptide. 4 disulfide bridges follow: cysteine 28/cysteine 114, cysteine 31/cysteine 103, cysteine 61/cysteine 72, and cysteine 148/cysteine 151.

The protein belongs to the ARMET family.

It localises to the secreted. Functionally, required during the maturation of the embryonic nervous system for maintenance of neuronal and cuticular connectivity. Essential for maintenance of dopaminergic neurons and dopamine levels. The chain is Mesencephalic astrocyte-derived neurotrophic factor homolog from Drosophila simulans (Fruit fly).